Reading from the N-terminus, the 244-residue chain is MPPSAQTQPKYKRVLLKLSGEALMGEENFGIDPKVLNRMALEIGQLIGIGVQVGLVIGGGNLFRGKALQDAGMDRVTGDHMGMLATVMNALAMRDALERSNIATRVMSAIPMSGVVEHYDRRRAIRDLKEGDVVIFCAGTGNPFFTTDSAACLRGIEIDADVVLKATKVDGVYSDDPMKVADAVKYDRLTYDEVLERKLGVMDLTAICLCRDHGMPVRVFDMNKASALINIVVGMEEGTLIERG.

17–20 contacts ATP; that stretch reads KLSG. G59 is a UMP binding site. Positions 60 and 64 each coordinate ATP. UMP contacts are provided by residues D79 and 140 to 147; that span reads TGNPFFTT. 3 residues coordinate ATP: T167, Y173, and D176.

It belongs to the UMP kinase family. Homohexamer.

The protein localises to the cytoplasm. It catalyses the reaction UMP + ATP = UDP + ADP. It participates in pyrimidine metabolism; CTP biosynthesis via de novo pathway; UDP from UMP (UMPK route): step 1/1. With respect to regulation, inhibited by UTP. In terms of biological role, catalyzes the reversible phosphorylation of UMP to UDP. The chain is Uridylate kinase from Hahella chejuensis (strain KCTC 2396).